Reading from the N-terminus, the 189-residue chain is uncharacterized protein (189 aa).

It belongs to the OsmC/Ohr family.

This is an uncharacterized protein from Methanocaldococcus jannaschii (strain ATCC 43067 / DSM 2661 / JAL-1 / JCM 10045 / NBRC 100440) (Methanococcus jannaschii).